The chain runs to 677 residues: Levanase (677 aa).

Positions M1–A24 are cleaved as a signal peptide. Residues W46 to D49, Q65, W73, F105 to S106, R171 to D172, E223, and W313 each bind substrate. Residue D49 is part of the active site.

The protein belongs to the glycosyl hydrolase 32 family.

The protein resides in the secreted. The enzyme catalyses Hydrolysis of terminal, non-reducing (2-&gt;1)- and (2-&gt;6)-linked beta-D-fructofuranose residues in fructans.. With respect to regulation, is completely inhibited by Ag(+) and Hg(2+) ions. Its function is as follows. Exo-fructosidase that can hydrolyze both levan and inulin, leading to the production of free fructose. Is also able to hydrolyze sucrose and to a small extent raffinose, but not melezitose, stachylose, cellobiose, maltose, and lactose. The polypeptide is Levanase (sacC) (Bacillus subtilis (strain 168)).